Here is a 669-residue protein sequence, read N- to C-terminus: Filensin (669 aa).

The tract at residues Met1 to Gly33 is head. Ser5 bears the Phosphoserine mark. Residues Gly33–Leu318 form the IF rod domain. Residues Leu34–Phe68 form a coil 1A region. Ala35 carries the N-acetylalanine modification. The linker 1 stretch occupies residues Gln69–Pro77. The coil 1B stretch occupies residues Glu78–Gln177. Residues Thr178 to Ser194 form a linker 12 region. Positions Leu195–Leu318 are coil 2. Positions Ser319–Ala669 are tail. Position 339 is a phosphoserine (Ser339). Disordered stretches follow at residues Val380–Ile435, Arg449–Gly468, and His505–Ser618. Residues Ser408–Gly417 are compositionally biased toward gly residues. Gly432 carries N-myristoyl glycine lipidation. Ser513 is subject to Phosphoserine. Over residues Asn545–Arg570 the composition is skewed to basic and acidic residues. The segment covering Pro583 to Ser593 has biased composition (polar residues). The residue at position 585 (Thr585) is a Phosphothreonine.

Belongs to the intermediate filament family. Part of a complex required for lens intermediate filament formation composed of BFSP1, BFSP2 and CRYAA. Identified in a complex that contains VIM, EZR, AHNAK, BFSP1, BFSP2, ANK2, PLEC, PRX and spectrin. Found in a complex composed of PPL (via C-terminal linker domain), BFSP1 and BFSP2 in the retinal lens. Within the complex interacts with BFSP2. Interacts (via C-terminus) with MIP (via C-terminus) in aged lens fiber cells. In terms of processing, proteolytically cleaved during lens cell fiber differentiation with increased fragmentation as fiber cell age increases. Myristoylated at Gly-432 following proteolytic cleavage at Asp-431. Post-translationally, acetylated at Ala-35 following proteolytic cleavage at Leu-34. As to expression, detected in eye lens fiber cells (at protein level). Expressed in retinal lens epithelial cells (at protein level).

It localises to the cell membrane. Its subcellular location is the cytoplasm. The protein localises to the cytoskeleton. The protein resides in the cell cortex. Required for the correct formation of lens intermediate filaments as part of a complex composed of BFSP1, BFSP2 and CRYAA. Involved in altering the calcium regulation of MIP water permeability. The protein is Filensin (Bfsp1) of Mus musculus (Mouse).